Reading from the N-terminus, the 89-residue chain is Probable Fe(2+)-trafficking protein (89 aa).

This sequence belongs to the Fe(2+)-trafficking protein family.

Its function is as follows. Could be a mediator in iron transactions between iron acquisition and iron-requiring processes, such as synthesis and/or repair of Fe-S clusters in biosynthetic enzymes. In Stenotrophomonas maltophilia (strain R551-3), this protein is Probable Fe(2+)-trafficking protein.